We begin with the raw amino-acid sequence, 338 residues long: Histidinol-phosphate aminotransferase (338 aa).

Lys204 is subject to N6-(pyridoxal phosphate)lysine.

It belongs to the class-II pyridoxal-phosphate-dependent aminotransferase family. Histidinol-phosphate aminotransferase subfamily. Requires pyridoxal 5'-phosphate as cofactor.

The catalysed reaction is L-histidinol phosphate + 2-oxoglutarate = 3-(imidazol-4-yl)-2-oxopropyl phosphate + L-glutamate. It functions in the pathway amino-acid biosynthesis; L-histidine biosynthesis; L-histidine from 5-phospho-alpha-D-ribose 1-diphosphate: step 7/9. In Pyrococcus furiosus (strain ATCC 43587 / DSM 3638 / JCM 8422 / Vc1), this protein is Histidinol-phosphate aminotransferase.